A 1090-amino-acid polypeptide reads, in one-letter code: MSSTTRRRSAWVAAATVGVSSFLAVAGITPAIAAAGAGQPATVTVPAASPVRAAVDGEYAQRFLAQYDKIKDPANGYFSAQGIPYHAVETLMVEAPDYGHETTSEAYSYWLWLEALYGQVTQDWAPLNHAWDTMEKYMIPQSVDQPTNSFYNPNSPATYAPEFNHPSSYPSQLNSGISGGTDPIGAELKATYGNADVYQMHWLADVDNIYGFGATPGAGCTLGPTATGTSFINTFQRGPQESVWETVPQPSCEEFKYGGKNGYLDLFTKDASYAKQWKYTSASDADARAVEAVYWANQWATEQGKAADVAATVAKAAKMGDYLRYTLFDKYFKKIGCTSPTCAAGQGREAAHYLLSWYMAWGGATDTSSGWAWRIGSSHAHFGYQNPLAAWALSTDPKLTPKSPTAKADWAASMQRQLEFYTWLQASNGGIAGGATNSWDGAYAQPPAGTPTFYGMGYTEAPVYVDPPSNRWFGMQAWGVQRVAELYYASGNAQAKKILDKWVPWVVANISTDGASWKVPSELKWTGKPDTWNAAAPTGNPGLTVEVTSYGQDVGVAADTARALLFYAAKSGDTASRDKAKALLDAIWANNQDPLGVSAVETRGDYKRFDDTYVANGDGIYIPSGWTGTMPNGDVIKPGVSFLDIRSFYKKDPNWSKVQTFLDGGAEPQFRYHRFWAQTAVAGALADYARLFDDGTTTPDTTAPTVPTGLQAGVVTSTEATISWTASTDDTRVTGYDVYRGATKVGTATTTSFTDTGLTASTAYAYTVRAFDAAGNVSAPSAALTVTTKATPSDTTAPSVPAITSSSSTANSVTIGWSASTDNAGGSGLAGYDVYRGATRVAQTTALTFTDTGLTASTAYEYTVRARDVAGNVSAPSTAVSVTTKSDTTPDTTAPSVPAGLAAMTVTETSVALTWNASTDTGGSGLKGYDVYRGATRVGSTTTASYTDTGLTAATAYQYTVRATDNAGNVSAASAALSVTTKTPQTGGSCSVAYNASSWNSGFTASVRITNTGTTTINGWSLGFDLTAGQKVQQGWSATWTQSGSTVTATNAPWNGTLAPGQTVDVGFNGSHTGQNPNPASFTLNGASCT.

Residues 1–33 (MSSTTRRRSAWVAAATVGVSSFLAVAGITPAIA) form the signal peptide. The propeptide occupies 34–53 (AAGAGQPATVTVPAASPVRA). A catalytic region spans residues 54 to 699 (AVDGEYAQRF…RLFDDGTTTP (646 aa)). Asp513 (nucleophile) is an active-site residue. 3 consecutive Fibronectin type-III domains span residues 706 to 791 (VPTG…TKAT), 797 to 887 (APSV…TKSD), and 897 to 984 (VPAG…TKTP). The 108-residue stretch at 983-1090 (TPQTGGSCSV…SFTLNGASCT (108 aa)) folds into the CBM2 domain. Cys990 and Cys1089 are oxidised to a cystine. The interval 1069–1090 (NGSHTGQNPNPASFTLNGASCT) is disordered. The span at 1070-1090 (GSHTGQNPNPASFTLNGASCT) shows a compositional bias: polar residues.

This sequence belongs to the glycosyl hydrolase 48 (cellulase L) family.

It catalyses the reaction Hydrolysis of (1-&gt;4)-beta-D-glucosidic linkages in cellulose and cellotetraose, releasing cellobiose from the non-reducing ends of the chains.. Functionally, hydrolyzes cellohexaose to a mixture of cellotetraose, cellotriose and cellobiose, with only a trace of glucose. It hydrolyzed cellopentaose to cellotriose and cellobiose, and cellotetraose to cellobiose, but it did not hydrolyze cellotriose. Also has weak endoglucanase activity. Hydrolyzes glucosidic bonds with inversion of anomeric configuration. This chain is Exoglucanase B (cbhB), found in Cellulomonas fimi (strain ATCC 484 / DSM 20113 / JCM 1341 / CCUG 24087 / LMG 16345 / NBRC 15513 / NCIMB 8980 / NCTC 7547 / NRS-133).